Here is a 184-residue protein sequence, read N- to C-terminus: Probable chemoreceptor glutamine deamidase CheD (184 aa).

This sequence belongs to the CheD family.

The catalysed reaction is L-glutaminyl-[protein] + H2O = L-glutamyl-[protein] + NH4(+). In terms of biological role, probably deamidates glutamine residues to glutamate on methyl-accepting chemotaxis receptors (MCPs), playing an important role in chemotaxis. The sequence is that of Probable chemoreceptor glutamine deamidase CheD from Rhizobium rhizogenes (strain K84 / ATCC BAA-868) (Agrobacterium radiobacter).